The following is a 339-amino-acid chain: DNA-directed RNA polymerase subunit alpha (339 aa).

The alpha N-terminal domain (alpha-NTD) stretch occupies residues 1 to 233; it reads MVREEVAGST…DLFLPFLHAE (233 aa). Residues 266 to 339 form an alpha C-terminal domain (alpha-CTD) region; sequence GIPLNCIFID…MDLLKNKLSF (74 aa).

The protein belongs to the RNA polymerase alpha chain family. In terms of assembly, in plastids the minimal PEP RNA polymerase catalytic core is composed of four subunits: alpha, beta, beta', and beta''. When a (nuclear-encoded) sigma factor is associated with the core the holoenzyme is formed, which can initiate transcription.

The protein resides in the plastid. The protein localises to the chloroplast. It carries out the reaction RNA(n) + a ribonucleoside 5'-triphosphate = RNA(n+1) + diphosphate. Functionally, DNA-dependent RNA polymerase catalyzes the transcription of DNA into RNA using the four ribonucleoside triphosphates as substrates. This chain is DNA-directed RNA polymerase subunit alpha, found in Agrostis stolonifera (Creeping bentgrass).